The primary structure comprises 964 residues: Reticulon-3 (964 aa).

The segment covering 1–24 (MAESSAATQSPSVSSSSSGAEPSA) has biased composition (low complexity). Disordered stretches follow at residues 1–32 (MAESSAATQSPSVSSSSSGAEPSALGGGGGSP), 68–109 (AGLS…SETL), and 179–200 (WVVKDQEPKNPNKVPDGEDRSA). The residue at position 2 (A2) is an N-acetylalanine. The Cytoplasmic segment spans residues 2-795 (AESSAATQSP…KKTGFVFGTT (794 aa)). S31 is subject to Phosphoserine. The segment covering 80-91 (SKSMTSSFLSSS) has biased composition (low complexity). Phosphoserine occurs at positions 217, 225, 230, 233, 270, 303, and 429. Positions 479–536 (ITEKPDSLPSAAAKTSEREIKETPSRETVRSEMCENSEQPQAQPETPTQKSLEGEVAS) are disordered. Residues 493-511 (TSEREIKETPSRETVRSEM) show a composition bias toward basic and acidic residues. Residues 516 to 527 (EQPQAQPETPTQ) are compositionally biased toward low complexity. Residue S529 is modified to Phosphoserine. Residue T593 is modified to Phosphothreonine. Residues S596, S597, and S673 each carry the phosphoserine modification. 2 disordered regions span residues 645–674 (ELSGSETKNIKSKYSEDSRETTGGAPTMSP) and 697–723 (VQDEGISSGGKLKQTFAPQSGPQSSSD). The span at 712-723 (FAPQSGPQSSSD) shows a compositional bias: polar residues. One can recognise a Reticulon domain in the interval 776-964 (VHDLIFWRDV…LPGIAKKKAE (189 aa)). Positions 796–819 (LIMLLSLAAFSVISVVSYLILALL) form an intramembrane region, helical. Over 820–876 (SVTISFRVYKSVIQAVQKSEEGHPFKAYLDVDITLSSEAFHNYMNAAMVHVNKALKL) the chain is Cytoplasmic. The segment at residues 877–899 (IIRLFLVEDLVDSLKLAVFMWLM) is an intramembrane region (helical). The Cytoplasmic portion of the chain corresponds to 900–903 (TYVG). The helical intramembrane region spans 904–926 (AVFNGITLLILAELLVFSVPIVY). The tract at residues 919 to 964 (VFSVPIVYEKYKTQIDHYVGIARDQTKSIVEKIQAKLPGIAKKKAE) is interaction with FADD. Residues 927–964 (EKYKTQIDHYVGIARDQTKSIVEKIQAKLPGIAKKKAE) lie on the Cytoplasmic side of the membrane. The tract at residues 932–934 (QID) is interaction with BACE1.

As to quaternary structure, homodimer. Interacts with RTN4. Isoform 3 interacts with BACE1, BACE2, BCL2 and FADD. Interacts with ATL1 and ATL2. Isoform 3 interacts with TMEM33. Interacts with ZFYVE27 and with KIF5A in a ZFYVE27-dependent manner. Interacts with RIGI. Interacts with TRIM25. In terms of tissue distribution, isoform 1, isoform 3, isoform 4 and isoform 5 are expressed in spinal cord. Isoform 1 is present in brain, where it is expressed in the neurons of cerebral cortex, hippocampus, hypothalamus and cerebellum (at protein level).

It is found in the endoplasmic reticulum membrane. The protein resides in the golgi apparatus membrane. May be involved in membrane trafficking in the early secretory pathway. Inhibits BACE1 activity and amyloid precursor protein processing. May induce caspase-8 cascade and apoptosis. May favor BCL2 translocation to the mitochondria upon endoplasmic reticulum stress. Induces the formation of endoplasmic reticulum tubules. Also acts as an inflammation-resolving regulator by interacting with both TRIM25 and RIGI, subsequently impairing RIGI 'Lys-63'-linked polyubiquitination leading to IRF3 and NF-kappa-B inhibition. This is Reticulon-3 (Rtn3) from Mus musculus (Mouse).